The sequence spans 83 residues: Small ribosomal subunit protein eS21 (83 aa).

Belongs to the eukaryotic ribosomal protein eS21 family. In terms of assembly, component of the 40S small ribosomal subunit.

It localises to the cytoplasm. The protein resides in the cytosol. Its subcellular location is the rough endoplasmic reticulum. Its function is as follows. Component of the small ribosomal subunit. The ribosome is a large ribonucleoprotein complex responsible for the synthesis of proteins in the cell. The polypeptide is Small ribosomal subunit protein eS21 (rps21) (Ictalurus punctatus (Channel catfish)).